The following is a 342-amino-acid chain: C-X-C chemokine receptor type 6 (342 aa).

Over 1-32 the chain is Extracellular; sequence MAEHDYHEDYGFNSFNDSSQEEHQDFLQFSKV. An N-linked (GlcNAc...) asparagine glycan is attached at asparagine 16. Residues 33-59 traverse the membrane as a helical segment; sequence FLPCMYLVVFVCGLVGNSLVLVISIFY. Topologically, residues 60–68 are cytoplasmic; that stretch reads HKLQSLTDV. Residues 69 to 89 traverse the membrane as a helical segment; that stretch reads FLVNLPLADLVFVCTLPFWAY. At 90–103 the chain is on the extracellular side; it reads AGIHEWVFGQVMCK. A disulfide bond links cysteine 102 and cysteine 180. A helical transmembrane segment spans residues 104 to 125; it reads SLLGIYTINFYTSMLILTCITV. Residues 126-143 are Cytoplasmic-facing; sequence DRFIVVVKATKAYNQQAK. The helical transmembrane segment at 144–164 threads the bilayer; the sequence is RMTWGKVTSLLIWVISLLVSL. At 165-187 the chain is on the extracellular side; the sequence is PQIIYGNVFNLDKLICGYHDEAI. A helical membrane pass occupies residues 188–215; sequence STVVLATQMTLGFFLPLLTMIVCYSVII. Residues 216 to 231 are Cytoplasmic-facing; sequence KTLLHAGGFQKHRSLK. Residues 232 to 259 traverse the membrane as a helical segment; sequence IIFLVMAVFLLTQMPFNLMKLIRSTHWE. The Extracellular portion of the chain corresponds to 260 to 275; it reads YYAMTSFHYTIMVTEA. The chain crosses the membrane as a helical span at residues 276–293; the sequence is IAYLRACLNPVLYAFVSL. The Cytoplasmic portion of the chain corresponds to 294–342; that stretch reads KFRKNFWKLVKDIGCLPYLGVSHQWKSSEDNSKTFSASHNVEATSMFQL.

Belongs to the G-protein coupled receptor 1 family.

The protein localises to the cell membrane. Its function is as follows. Receptor for the C-X-C chemokine CXCL16. Used as a coreceptor by SIVs and by strains of HIV-2 and m-tropic HIV-1. This Pan troglodytes (Chimpanzee) protein is C-X-C chemokine receptor type 6 (CXCR6).